The primary structure comprises 376 residues: Cytoplasmic tRNA 2-thiolation protein 1 (376 aa).

Belongs to the TtcA family. CTU1/NCS6/ATPBD3 subfamily.

The protein localises to the cytoplasm. It functions in the pathway tRNA modification; 5-methoxycarbonylmethyl-2-thiouridine-tRNA biosynthesis. In terms of biological role, plays a central role in 2-thiolation of mcm(5)S(2)U at tRNA wobble positions of tRNA(Lys), tRNA(Glu) and tRNA(Gln). Directly binds tRNAs and probably acts by catalyzing adenylation of tRNAs, an intermediate required for 2-thiolation. It is unclear whether it acts as a sulfurtransferase that transfers sulfur from thiocarboxylated URM1 onto the uridine of tRNAs at wobble position. Prior mcm(5) tRNA modification by the elongator complex is required for 2-thiolation. May also be involved in protein urmylation. This is Cytoplasmic tRNA 2-thiolation protein 1 from Scheffersomyces stipitis (strain ATCC 58785 / CBS 6054 / NBRC 10063 / NRRL Y-11545) (Yeast).